Reading from the N-terminus, the 125-residue chain is MVLLSFSRYCDTITMDYEENSIEGTSGYVEPITPMISKGDSGIIAISPLCDHYNNHMRIDSLTTCSDEEIIESLYQNIFSIVLCLQTEESGYGSHTPVSAACPGAPMKLTKLSRNIDPGFQRKLF.

In terms of biological role, probable cyclin-dependent protein kinase (CDK) inhibitor that functions as a repressor of mitosis in the endoreduplication cell cycle. This Arabidopsis thaliana (Mouse-ear cress) protein is Cyclin-dependent protein kinase inhibitor SMR16.